Here is a 730-residue protein sequence, read N- to C-terminus: Catalase-peroxidase (730 aa).

The tryptophyl-tyrosyl-methioninium (Trp-Tyr) (with M-251) cross-link spans 92 to 225 (WHSAGTYRSI…LSAVHMGLIY (134 aa)). Residue His93 is the Proton acceptor of the active site. Positions 225–251 (YVNPEGPDGIPDPVASARDIRTTFRRM) form a cross-link, tryptophyl-tyrosyl-methioninium (Tyr-Met) (with W-92). His266 contributes to the heme b binding site.

The protein belongs to the peroxidase family. Peroxidase/catalase subfamily. Homodimer or homotetramer. The cofactor is heme b. In terms of processing, formation of the three residue Trp-Tyr-Met cross-link is important for the catalase, but not the peroxidase activity of the enzyme.

The protein localises to the cytoplasm. The enzyme catalyses H2O2 + AH2 = A + 2 H2O. It catalyses the reaction 2 H2O2 = O2 + 2 H2O. In terms of biological role, bifunctional enzyme with both catalase and broad-spectrum peroxidase activity. The polypeptide is Catalase-peroxidase (Blumeria hordei (Barley powdery mildew)).